Reading from the N-terminus, the 62-residue chain is Histone H1.2, embryonic (62 aa).

Positions 1-53 (HVVAAITALKERGGSSMKKQSVFIKKALKSGVEKGTLVQVKGKGASGSFKLGK) constitute an H15 domain.

The protein belongs to the histone H1/H5 family.

The protein resides in the nucleus. Its subcellular location is the chromosome. Histones H1 are necessary for the condensation of nucleosome chains into higher-order structures. The polypeptide is Histone H1.2, embryonic (Parechinus angulosus (Angulate sea urchin)).